An 86-amino-acid chain; its full sequence is MKTLLLTLVVVTIVCLDLGYTLTCLNCPEMFCGKFQTCRNGEKICFKMLQQRRPFSLRYIRGCAATCPGTKPRDMVECCSTDRCNR.

The signal sequence occupies residues 1 to 21; sequence MKTLLLTLVVVTIVCLDLGYT. 5 disulfides stabilise this stretch: Cys-24–Cys-45, Cys-27–Cys-32, Cys-38–Cys-63, Cys-67–Cys-78, and Cys-79–Cys-84.

This sequence belongs to the three-finger toxin family. Ancestral subfamily. Orphan group II sub-subfamily. As to expression, expressed by the venom gland.

It localises to the secreted. Its function is as follows. Binds with low affinity to muscular (alpha-1-beta-1-delta-epsilon/CHRNA1-CHRNB1-CHRND-CHRNE) and very low affinity to neuronal (alpha-7/CHRNA7) nicotinic acetylcholine receptor (nAChR). This is Weak neurotoxin 8 from Naja sputatrix (Malayan spitting cobra).